Reading from the N-terminus, the 170-residue chain is Acireductone dioxygenase (170 aa).

H99, H101, E105, and H144 together coordinate Fe(2+). Residues H99, H101, E105, and H144 each coordinate Ni(2+).

It belongs to the acireductone dioxygenase (ARD) family. As to quaternary structure, monomer. The cofactor is Fe(2+). Ni(2+) serves as cofactor.

The catalysed reaction is 1,2-dihydroxy-5-(methylsulfanyl)pent-1-en-3-one + O2 = 3-(methylsulfanyl)propanoate + CO + formate + 2 H(+). The enzyme catalyses 1,2-dihydroxy-5-(methylsulfanyl)pent-1-en-3-one + O2 = 4-methylsulfanyl-2-oxobutanoate + formate + 2 H(+). The protein operates within amino-acid biosynthesis; L-methionine biosynthesis via salvage pathway; L-methionine from S-methyl-5-thio-alpha-D-ribose 1-phosphate: step 5/6. In terms of biological role, catalyzes 2 different reactions between oxygen and the acireductone 1,2-dihydroxy-3-keto-5-methylthiopentene (DHK-MTPene) depending upon the metal bound in the active site. Fe-containing acireductone dioxygenase (Fe-ARD) produces formate and 2-keto-4-methylthiobutyrate (KMTB), the alpha-ketoacid precursor of methionine in the methionine recycle pathway. Ni-containing acireductone dioxygenase (Ni-ARD) produces methylthiopropionate, carbon monoxide and formate, and does not lie on the methionine recycle pathway. This Bacillus mycoides (strain KBAB4) (Bacillus weihenstephanensis) protein is Acireductone dioxygenase.